Consider the following 520-residue polypeptide: Cytochrome b5 reductase 4 (520 aa).

Position 1 is an N-acetylmethionine (M1). The disordered stretch occupies residues 1-27; it reads MLNVPSQAFPAPGSQQRVASQGRSKVP. Residues 13–23 show a composition bias toward polar residues; that stretch reads GSQQRVASQGR. In terms of domain architecture, Cytochrome b5 heme-binding spans 54–130; the sequence is LIEVTEEELK…LKECLVGRMA (77 aa). Residues H89 and H112 each coordinate heme. The 92-residue stretch at 164–255 folds into the CS domain; sequence PSSPSYDWFQ…KETVSWKCLG (92 aa). Positions 272–384 constitute an FAD-binding FR-type domain; the sequence is LYYRQCQLIS…SGPEGNFKVS (113 aa). Residues 364-379 and 391-423 each bind FAD; these read DRLQ…GPEG and DLFL…KVKL.

This sequence belongs to the flavoprotein pyridine nucleotide cytochrome reductase family. Requires FAD as cofactor. As to expression, isoform 2 is expressed in testis, brain, skeletal muscle and in the male germline.

The protein resides in the endoplasmic reticulum. The enzyme catalyses 2 Fe(III)-[cytochrome b5] + NADH = 2 Fe(II)-[cytochrome b5] + NAD(+) + H(+). Its function is as follows. NADH-cytochrome b5 reductase involved in endoplasmic reticulum stress response pathway. Plays a critical role in protecting pancreatic beta-cells against oxidant stress, possibly by protecting the cell from excess buildup of reactive oxygen species (ROS). The protein is Cytochrome b5 reductase 4 (Cyb5r4) of Rattus norvegicus (Rat).